Here is a 309-residue protein sequence, read N- to C-terminus: MVKIYAPASIGNVSIGFDVLGAAVTPLDGTLLGDCVSIAASSHFSLHCHGRFVDSLPSTVQENIVYQCWQRFCEVTGRELAVEMVLEKNMPIGSGLGSSACSVVAALAALNRFAGEPLDAHRLLMLMGELEGRISGSVHYDNVAPCYLGGLQLMLEAQEIISQPVPCFDEWLWVMAYPGIKVSTAEARAILPPHYSRGDCVRHGRHLAGFIHACHTRQPSLAAALMQDVIAEPYRCGLLPGFADARRAAGELGALACGISGSGPTLFAVCDDLTAAQAVAQWLAQHYLQNEQGFVHICRLDSAGARQLG.

91–101 (PIGSGLGSSAC) provides a ligand contact to ATP.

Belongs to the GHMP kinase family. Homoserine kinase subfamily.

Its subcellular location is the cytoplasm. The enzyme catalyses L-homoserine + ATP = O-phospho-L-homoserine + ADP + H(+). It functions in the pathway amino-acid biosynthesis; L-threonine biosynthesis; L-threonine from L-aspartate: step 4/5. Its function is as follows. Catalyzes the ATP-dependent phosphorylation of L-homoserine to L-homoserine phosphate. The polypeptide is Homoserine kinase (Edwardsiella ictaluri (strain 93-146)).